Here is a 351-residue protein sequence, read N- to C-terminus: Phenylalanine--tRNA ligase alpha subunit (351 aa).

Glu-266 serves as a coordination point for Mg(2+).

Belongs to the class-II aminoacyl-tRNA synthetase family. Phe-tRNA synthetase alpha subunit type 1 subfamily. In terms of assembly, tetramer of two alpha and two beta subunits. It depends on Mg(2+) as a cofactor.

The protein localises to the cytoplasm. The enzyme catalyses tRNA(Phe) + L-phenylalanine + ATP = L-phenylalanyl-tRNA(Phe) + AMP + diphosphate + H(+). The protein is Phenylalanine--tRNA ligase alpha subunit of Anaplasma marginale (strain St. Maries).